The chain runs to 145 residues: 3-hydroxyacyl-[acyl-carrier-protein] dehydratase FabZ (145 aa).

Residue His-47 is part of the active site.

It belongs to the thioester dehydratase family. FabZ subfamily.

It localises to the cytoplasm. It carries out the reaction a (3R)-hydroxyacyl-[ACP] = a (2E)-enoyl-[ACP] + H2O. Involved in unsaturated fatty acids biosynthesis. Catalyzes the dehydration of short chain beta-hydroxyacyl-ACPs and long chain saturated and unsaturated beta-hydroxyacyl-ACPs. This chain is 3-hydroxyacyl-[acyl-carrier-protein] dehydratase FabZ, found in Ruthia magnifica subsp. Calyptogena magnifica.